Consider the following 276-residue polypeptide: DnaJ homolog subfamily C member 27-B (276 aa).

Residues 23-30 (GNAEVGKS), 71-75 (DMAGH), and 137-140 (NKID) each bind GTP. Residues 220-276 (DSWDMLGVKPGATRDEVNKAYRKLAVLLHPDKCVAPGSEDAFKAVVNARTALLKNIK) form the J domain.

It belongs to the small GTPase superfamily. Rab family.

It localises to the nucleus. In terms of biological role, GTPase possibly involved in regulation of the MEK/ERK pathway. The chain is DnaJ homolog subfamily C member 27-B (dnajc27-b) from Xenopus laevis (African clawed frog).